The primary structure comprises 197 residues: Imidazoleglycerol-phosphate dehydratase (197 aa).

Belongs to the imidazoleglycerol-phosphate dehydratase family.

The protein resides in the cytoplasm. The enzyme catalyses D-erythro-1-(imidazol-4-yl)glycerol 3-phosphate = 3-(imidazol-4-yl)-2-oxopropyl phosphate + H2O. It functions in the pathway amino-acid biosynthesis; L-histidine biosynthesis; L-histidine from 5-phospho-alpha-D-ribose 1-diphosphate: step 6/9. The polypeptide is Imidazoleglycerol-phosphate dehydratase (Methylococcus capsulatus (strain ATCC 33009 / NCIMB 11132 / Bath)).